The chain runs to 933 residues: Dual 3',5'-cyclic-AMP and -GMP phosphodiesterase 11A (933 aa).

The segment at 42–125 (HSQGQGALGP…ASQKELRKSF (84 aa)) is disordered. 3 positions are modified to phosphoserine: Ser162, Ser163, and Ser239. GAF domains lie at 217–370 (DLTS…GIAI) and 402–558 (DLEK…GLGI). Ser424 contacts 3',5'-cyclic GMP. Positions 588 to 912 (SKAEVDKFKA…SKWEELHQKR (325 aa)) constitute a PDEase domain. Catalysis depends on His664, which acts as the Proton donor. His668, His704, Asp705, and Asp816 together coordinate a divalent metal cation.

The protein belongs to the cyclic nucleotide phosphodiesterase family. The cofactor is a divalent metal cation. As to expression, isoform 1 is present in prostate, pituitary, heart and liver. It is however not present in testis nor in penis, suggesting that weak inhibition by Tadalafil (Cialis) is not relevant (at protein level). Isoform 2 may be expressed in testis. Isoform 4 is expressed in adrenal cortex.

It is found in the cytoplasm. It localises to the cytosol. It catalyses the reaction 3',5'-cyclic GMP + H2O = GMP + H(+). The enzyme catalyses 3',5'-cyclic AMP + H2O = AMP + H(+). With respect to regulation, inhibited by 3-isobutyl-1-methylxanthine (IBMX), zaprinast and dipyridamole. cGMP acts as an allosteric activator. Weakly inhibited by Sildenafil (Viagra) and Tadalafil (Cialis); however, the fact that the protein is probably absent from testis, suggests that it is not biologically relevant and is not related with erectile dysfunction. Plays a role in signal transduction by regulating the intracellular concentration of cyclic nucleotides cAMP and cGMP. Catalyzes the hydrolysis of both cAMP and cGMP to 5'-AMP and 5'-GMP, respectively. The chain is Dual 3',5'-cyclic-AMP and -GMP phosphodiesterase 11A from Homo sapiens (Human).